The sequence spans 613 residues: Ribosome-associated molecular chaperone SSB1 (613 aa).

A nucleotide binding domain (NBD) region spans residues methionine 1–aspartate 391. Residues threonine 16–tyrosine 18, lysine 73, glycine 205–threonine 207, glutamate 271–serine 278, and glycine 342 contribute to the ATP site. Residues threonine 392 to proline 402 form an inter-domain linker region. The interval leucine 403–arginine 613 is substrate binding domain (SBD). The lid domain (SBDalpha) stretch occupies residues serine 516–serine 612. The Nuclear export signal signature appears at isoleucine 574–leucine 582.

Belongs to the heat shock protein 70 family. Ssb-type Hsp70 subfamily. As to quaternary structure, binds to ribosomes. Binds close to the ribosomal tunnel exit via contacts with both ribosomal proteins and rRNA. Directly interacts with nascent polypeptides. This interaction is dependent on the ribosome-associated complex (RAC). Interacts with SSE1. Interacts with FES1.

The protein resides in the cytoplasm. The catalysed reaction is ATP + H2O = ADP + phosphate + H(+). Functionally, ribosome-bound, Hsp70-type chaperone that assists in the cotranslational folding of newly synthesized proteins in the cytosol. Stimulates folding by interacting with nascent chains, binding to short, largely hydrophobic sequences exposed by unfolded proteins, thereby stabilizing longer, more slowly translated, and aggregation-prone nascent polypeptides and domains that cannot fold stably until fully synthesized. The Hsp70-protein substrate interaction depends on ATP-binding and on allosteric regulation between the NBD and the SBD. The ATP-bound state is characterized by a fast exchange rate of substrate (low affinity state), while in the ADP-bound state exchange is much slower (high affinity state). During the Hsp70 cycle, the chaperone switches between the ATP-bound state (open conformation) and the ADP-bound state (closed conformation) by major conformational rearrangements involving mainly the lid domain. Ssb cooperates with a specific Hsp40/Hsp70 co-chaperone termed the ribosome-associated complex (RAC), which stimulates the ATPase activity of the ribosome-associated pool of Ssbs and switches it to the high affinity substrate binding state. Hsp110 chaperone SSE1 and FES1 act as nucleotide exchange factors that cause substrate release. The protein is Ribosome-associated molecular chaperone SSB1 (SSB1) of Zygosaccharomyces rouxii (strain ATCC 2623 / CBS 732 / NBRC 1130 / NCYC 568 / NRRL Y-229).